Reading from the N-terminus, the 184-residue chain is TRAF-interacting protein with FHA domain-containing protein A (184 aa).

Residue threonine 9 is modified to Phosphothreonine. An FHA domain is found at 47–103 (VKFGRNSNMCQYTFQDKQVSRIQFVLQPFKQFNSSVLSFEIKNMSKKTSLMVDNQEL). Positions 152-184 (NNWPTQNPIPEDGMYSSYFTHRSSPSEMDENEL) are disordered. Over residues 168–177 (SYFTHRSSPS) the composition is skewed to polar residues.

Belongs to the TIFA family. As to quaternary structure, homooligomer; homooligomerizes following phosphorylation at Thr-9. Interacts with IRAK1, TRAF2 and TRAF6. Interacts with TIFAB; binding to TIFAB inhibits TRAF6 activation, possibly by inducing a conformational change in TIFA. Interacts with ZCCHC11; binding to ZCCHC11 suppresses the TRAF6-dependent activation of NF-kappa-B. Phosphorylated at Thr-9 following detection of ADP-D-glycero-beta-D-manno-heptose (ADP-Heptose) by ALPK1. Phosphorylation at Thr-9 by ALPK1 leads to the formation of an intermolecular binding between the FHA domain and phosphorylated Thr-9, promoting TIFA oligomerization and TIFA-mediated NF-kappa-B activation. In terms of tissue distribution, highly expressed in the spleen and at lower levels in heart, brain, lung, liver, kidney and testes.

It is found in the cytoplasm. Adapter molecule that plays a key role in the activation of pro-inflammatory NF-kappa-B signaling following detection of bacterial pathogen-associated molecular pattern metabolites (PAMPs). Promotes activation of an innate immune response by inducing the oligomerization and polyubiquitination of TRAF6, which leads to the activation of TAK1 and IKK through a proteasome-independent mechanism. TIFA-dependent innate immune response is triggered by ADP-D-glycero-beta-D-manno-heptose (ADP-Heptose), a potent PAMP present in all Gram-negative and some Gram-positive bacteria: ADP-Heptose is recognized by ALPK1, which phosphorylates TIFA at Thr-9, leading to TIFA homooligomerization and subsequent activation of pro-inflammatory NF-kappa-B signaling. The chain is TRAF-interacting protein with FHA domain-containing protein A from Mus musculus (Mouse).